A 703-amino-acid polypeptide reads, in one-letter code: Capsid vertex component 1 (703 aa).

Residues 200–246 (LGESASPRPQPLARPHAGAPADPPIVGASDPPISPEEQLTAPGGDTT) form a disordered region.

It belongs to the herpesviridae CVC1 protein family. In terms of assembly, interacts (via C-terminus) with capsid vertex component 2/CVC2.

Its subcellular location is the virion. The protein resides in the host nucleus. Capsid vertex-specific component that plays a role during viral DNA encapsidation, assuring correct genome cleavage and presumably stabilizing capsids that contain full-length viral genomes. The protein is Capsid vertex component 1 of Human herpesvirus 1 (strain 17) (HHV-1).